Here is a 363-residue protein sequence, read N- to C-terminus: Anhydro-N-acetylmuramic acid kinase (363 aa).

ATP is bound at residue 10–17 (GTSLDGLD).

It belongs to the anhydro-N-acetylmuramic acid kinase family.

The catalysed reaction is 1,6-anhydro-N-acetyl-beta-muramate + ATP + H2O = N-acetyl-D-muramate 6-phosphate + ADP + H(+). The protein operates within amino-sugar metabolism; 1,6-anhydro-N-acetylmuramate degradation. It participates in cell wall biogenesis; peptidoglycan recycling. Its function is as follows. Catalyzes the specific phosphorylation of 1,6-anhydro-N-acetylmuramic acid (anhMurNAc) with the simultaneous cleavage of the 1,6-anhydro ring, generating MurNAc-6-P. Is required for the utilization of anhMurNAc either imported from the medium or derived from its own cell wall murein, and thus plays a role in cell wall recycling. The sequence is that of Anhydro-N-acetylmuramic acid kinase from Pseudomonas fluorescens (strain Pf0-1).